The following is a 284-amino-acid chain: Formyltetrahydrofolate deformylase (284 aa).

The ACT domain maps to 7-90 (TLLVSCPDQP…QIHFSDQLPR (84 aa)). Residue D228 is part of the active site.

The protein belongs to the PurU family.

It carries out the reaction (6R)-10-formyltetrahydrofolate + H2O = (6S)-5,6,7,8-tetrahydrofolate + formate + H(+). It participates in purine metabolism; IMP biosynthesis via de novo pathway; formate from 10-formyl-5,6,7,8-tetrahydrofolate: step 1/1. Catalyzes the hydrolysis of 10-formyltetrahydrofolate (formyl-FH4) to formate and tetrahydrofolate (FH4). The protein is Formyltetrahydrofolate deformylase of Synechocystis sp. (strain ATCC 27184 / PCC 6803 / Kazusa).